A 465-amino-acid polypeptide reads, in one-letter code: Endo-1,3-1,4-beta-glycanase EglC (465 aa).

Hemolysin-type calcium-binding repeat units lie at residues 33-50 (YGTA…VDVT), 105-122 (FGNS…SQTI), and 123-140 (NGGA…ADTF). Positions 213–462 (LDRSVLTQTF…YVKAYSLDAD (250 aa)) constitute a GH16 domain. Residue Glu349 is the Nucleophile of the active site. Catalysis depends on Glu354, which acts as the Proton donor.

The protein belongs to the glycosyl hydrolase 16 family.

The protein localises to the secreted. Its pathway is glycan metabolism; exopolysaccharide biosynthesis. In terms of biological role, cleaves high molecular weight succinoglycan to yield LMW succinoglycan. Dynamically regulates the molecular weight distribution of succinoglycan by cleaving nascent succinoglycan only during a limited period after its synthesis, perhaps before it undergoes a time-dependent change in its conformation or aggregation state. This is Endo-1,3-1,4-beta-glycanase EglC (eglC) from Rhizobium meliloti (strain 1021) (Ensifer meliloti).